We begin with the raw amino-acid sequence, 144 residues long: Large ribosomal subunit protein uL15 (144 aa).

Residues 1–54 (MRLNTLSPAAGAKHAPKRVGRGMGSGLGKTAGRGHKGQKSRSGGGVRPGFEGGQ) form a disordered region. 2 stretches are compositionally biased toward gly residues: residues 21 to 31 (RGMGSGLGKTA) and 42 to 52 (SGGGVRPGFEG).

This sequence belongs to the universal ribosomal protein uL15 family. As to quaternary structure, part of the 50S ribosomal subunit.

Binds to the 23S rRNA. This is Large ribosomal subunit protein uL15 from Shewanella oneidensis (strain ATCC 700550 / JCM 31522 / CIP 106686 / LMG 19005 / NCIMB 14063 / MR-1).